A 220-amino-acid polypeptide reads, in one-letter code: Probable chemoreceptor glutamine deamidase CheD (220 aa).

It belongs to the CheD family.

The enzyme catalyses L-glutaminyl-[protein] + H2O = L-glutamyl-[protein] + NH4(+). Its function is as follows. Probably deamidates glutamine residues to glutamate on methyl-accepting chemotaxis receptors (MCPs), playing an important role in chemotaxis. The sequence is that of Probable chemoreceptor glutamine deamidase CheD from Cupriavidus metallidurans (strain ATCC 43123 / DSM 2839 / NBRC 102507 / CH34) (Ralstonia metallidurans).